The primary structure comprises 134 residues: Syncollin (134 aa).

Positions 1–21 (MSPLCLLLLALALVAVPGARG) are cleaved as a signal peptide.

As to quaternary structure, monomer and homooligomer; most probably hexameric. Interacts with GP2. According to PubMed:10753942 interaction with syntaxins shown in PubMed:9244306 is physiologically questionable. Post-translationally, contains intrachain disulfide bonds. Specifically expressed in pancreas and also detected in secretory granules of parotid gland (at protein level). Expressed in pancreas, spleen, small intestine, lung and neutrophilic granulocytes (at protein level). Expressed by epithelial cells in duodenum and colon.

It localises to the zymogen granule membrane. The protein resides in the zymogen granule lumen. Functions in exocytosis in pancreatic acinar cells regulating the fusion of zymogen granules with each other. May have a pore-forming activity on membranes and regulate exocytosis in other exocrine tissues. This is Syncollin (Sycn) from Rattus norvegicus (Rat).